The chain runs to 644 residues: Chaperone protein DnaK (644 aa).

At Thr199 the chain carries Phosphothreonine; by autocatalysis. A disordered region spans residues Leu602–Lys644. A compositionally biased stretch (low complexity) spans Ala604–Ala614. The segment covering Gly631 to Lys644 has biased composition (acidic residues).

It belongs to the heat shock protein 70 family.

In terms of biological role, acts as a chaperone. The chain is Chaperone protein DnaK from Teredinibacter turnerae (strain ATCC 39867 / T7901).